The primary structure comprises 342 residues: Organic solute transporter alpha-like protein 2 (342 aa).

Topologically, residues 1–50 are extracellular; it reads MLEISPWETLVKLLTDSLLNCTGTHEDVPHAKTFLRSLTTTYIASLAVAT. Asn20 carries an N-linked (GlcNAc...) asparagine glycan. A helical membrane pass occupies residues 51 to 71; it reads AVTVGTVCLAVLHLIYIHFYI. The Cytoplasmic segment spans residues 72 to 79; the sequence is THSSRRLH. Residues 80-100 form a helical membrane-spanning segment; that stretch reads IVLLACTAPLVSLLALVAMYM. Topologically, residues 101 to 109 are extracellular; it reads PRVWFLSHL. A helical membrane pass occupies residues 110–130; the sequence is LSFLYFSFALWVIICLLLHIF. Over 131 to 176 the chain is Cytoplasmic; sequence DGHHALVTKMMQRLQYVEIATPPFCCLFPCLPKVRLEGKKIRWCEL. A helical membrane pass occupies residues 177–197; sequence MVMQAPIVRLFATLVSLVIYF. The Extracellular portion of the chain corresponds to 198–208; it reads EYQDQGLVPLK. Residues 209 to 229 traverse the membrane as a helical segment; it reads VLDFITLPSLLAGIYGTHILV. Residues 230–243 lie on the Cytoplasmic side of the membrane; sequence TTVSRMDELISYRY. The chain crosses the membrane as a helical span at residues 244–264; the sequence is VVVFRLLDFFFMVFGLQQPVF. The Extracellular segment spans residues 265–290; it reads DFLARYGAFGCGTVLPAIETSFYWKN. Residues 291-311 traverse the membrane as a helical segment; the sequence is FFTVIEAFCVTLISTVLLQPS. The Cytoplasmic portion of the chain corresponds to 312–342; the sequence is KSSFFDKHPSCRSMSSARSTITDVDTDESTT.

The protein belongs to the OST-alpha family.

It localises to the cell membrane. Functionally, probable transporter. This chain is Organic solute transporter alpha-like protein 2 (osta-2), found in Caenorhabditis elegans.